The chain runs to 285 residues: Energy-coupling factor transporter ATP-binding protein EcfA2 (285 aa).

The ABC transporter domain maps to 3–245 (INFEQVNFSY…DLVWFKTVAL (243 aa)). Residue 40–47 (GQTGSGKS) coordinates ATP. Catalysis depends on Glu171, which acts as the Proton acceptor.

This sequence belongs to the ABC transporter superfamily. Energy-coupling factor EcfA family. As to quaternary structure, forms a stable energy-coupling factor (ECF) transporter complex probably composed of 2 membrane-embedded substrate-binding proteins (S component), 2 ATP-binding proteins (A component) and 2 transmembrane proteins (T component). This complex interacts with a number of substrate-specific components, including FolT, PanT and RibU for 5-formyltetrahydrofolate, pantothenate and riboflavin respectively.

It localises to the cell membrane. Functionally, ATP-binding (A) component of a common energy-coupling factor (ECF) ABC-transporter complex. Unlike classic ABC transporters this ECF transporter provides the energy necessary to transport a number of different substrates including 5-formyltetrahydrofolate, pantothenate and riboflavin. Expression of the complex plus FolT in E.coli allows 5-formyltetrahydrofolate uptake; 5-formyltetrahydrofolate is not taken up in the absence of FolT or the EcfA1A2T complex. The chain is Energy-coupling factor transporter ATP-binding protein EcfA2 from Leuconostoc mesenteroides subsp. mesenteroides (strain ATCC 8293 / DSM 20343 / BCRC 11652 / CCM 1803 / JCM 6124 / NCDO 523 / NBRC 100496 / NCIMB 8023 / NCTC 12954 / NRRL B-1118 / 37Y).